The sequence spans 469 residues: uncharacterized protein (469 aa).

An N-terminal signal peptide occupies residues 1 to 19; sequence MRINFVLLITLILPWFVSG. The next 7 helical transmembrane spans lie at 199–219, 236–256, 283–303, 305–325, 338–358, 386–406, and 413–433; these read IKST…TWLL, AFWV…MVAI, AYTS…PALV, YYVY…FAPL, ILLK…PFFA, IALA…RPLL, and GFQL…AFLF.

Its subcellular location is the membrane. This is an uncharacterized protein from Schizosaccharomyces pombe (strain 972 / ATCC 24843) (Fission yeast).